The following is a 264-amino-acid chain: Synaptophysin-like protein 2 (264 aa).

Over 1-33 (MSSTESPSRAADKSPRQQVDRLLEGLRWRRLEE) the chain is Cytoplasmic. One can recognise an MARVEL domain in the interval 30–238 (RLEEPLGFIK…NCWFVFKETP (209 aa)). A helical membrane pass occupies residues 34 to 54 (PLGFIKVLQWLFAIFAFGSCG). At 55-116 (SYSGETGAMV…LMGDFSAPAE (62 aa)) the chain is on the vesicular side. Residues 117–137 (FFVTLGIFSFFYTMAALVVYL) form a helical membrane-spanning segment. At 138-150 (RFHKLYTENKRFP) the chain is on the cytoplasmic side. Residues 151-171 (LVDFCVTVSFTFFWLVAAAAW) traverse the membrane as a helical segment. Topologically, residues 172-213 (GKGLTDVKGATRPSSLTAAMSVCHGEEAVCSAGATPSMGLAN) are vesicular. The N-linked (GlcNAc...) asparagine glycan is linked to Asn213. Residues 214-234 (ISVLFGFINFFLWAGNCWFVF) traverse the membrane as a helical segment. At 235 to 264 (KETPWHGQGQDQGQGPSQESAAEQGAVEKQ) the chain is on the cytoplasmic side. Residues 242 to 264 (QGQDQGQGPSQESAAEQGAVEKQ) form a disordered region.

This sequence belongs to the synaptophysin/synaptobrevin family. In terms of tissue distribution, skeletal muscle.

The protein localises to the membrane. In terms of biological role, involved in communication between the T-tubular and junctional sarcoplasmic reticulum (SR) membranes. The protein is Synaptophysin-like protein 2 (SYPL2) of Oryctolagus cuniculus (Rabbit).